Consider the following 814-residue polypeptide: MKKQFNRMRQLANQTVGRAEKTEVLSEDLLQVEKRLELVKQVSHSTHKKLTACLQGQQGAEADKRSKKLPLTTLAQCLMEGSAILGDDTLLGKMLKLCGETEDELAQELIHFELRVERDVIEPLFLLAEVEIPNIQKQRKHLAKLVLDMDSSRTRWQQTSKSSGLSSSLQPAGAKADALREEMEEAANRVEICRDQLSADMYSFVAKEIDYANYFQTLIEVQAEYHRKSLTLLQAVLPQIKAQQEAWVEKPSFGKPLEEHLMISGREIAFPIEACVTMLLECGMQEEGLFRVAPSASKLKKLKAALDCCVVDVQEYSADPHAIAGALKSYLRELPEPLMTFELYDEWIQASNIQEQDKRLQALWNACEKLPKANHNNIRYLIKFLSKLSEYQDVNKMTPSNMAIVLGPNLLWPQSEGNITEMMTTVSLQIVGIIEPIIQHADWFFPGEIEFNITGSYGSPVHVNHNANYSSMPSPDMDPADRRQPEQARRPLSVATDNMMLEFYKKDGLRKIQSMGVRVMDTSWVARRGSSAGRKAACAPPSMQPPAPPSELAAPLPSPLPEQVPDSPATPAPALSPSGASLQPTPERPSVSKSKELSPGSGQKGSPGSIQGTTCPGTQLGPQPAASPSQLPADQSPHTLRKVSKKLAPIPPKVPFVQPGTVSDQPTGQPSPVSLSPTPPSTPSPYGLSYPPGYSMASGQLSPASAPPLASPSVFTSTLAKSRPTPKPRQRPTLPPPQPPSVSLSASSPQSTEHPMLDGMSPGESMSTDLVHFDVPSIHIELGSTLRLSPLEHARRHSVTDKRDSEEESESTAL.

The BAR domain occupies 14–249 (QTVGRAEKTE…IKAQQEAWVE (236 aa)). One can recognise a Rho-GAP domain in the interval 255–445 (KPLEEHLMIS…PIIQHADWFF (191 aa)). Disordered stretches follow at residues 467–493 (ANYSSMPSPDMDPADRRQPEQARRPLS), 531–768 (SAGR…SMST), and 784–814 (STLRLSPLEHARRHSVTDKRDSEEESESTAL). The segment covering 479–489 (PADRRQPEQAR) has biased composition (basic and acidic residues). Residue Ser-493 is modified to Phosphoserine. Low complexity-rich tracts occupy residues 531–541 (SAGRKAACAPP), 567–581 (SPATPAPALSPSGAS), 598–612 (SPGSGQKGSPGSIQG), 622–637 (PQPAASPSQLPADQSP), 684–704 (SPYGLSYPPGYSMASGQLSPA), and 741–752 (SVSLSASSPQST). The tract at residues 727–814 (KPRQRPTLPP…SEEESESTAL (88 aa)) is interaction with BST2. Over residues 790–805 (PLEHARRHSVTDKRDS) the composition is skewed to basic and acidic residues. Phosphoserine is present on Ser-805. Positions 811–814 (STAL) match the PDZ-binding motif.

As to quaternary structure, interacts with BST2 (via cytoplasmic domain). Interacts (probably via PDZ-binding motif) with SHANK3 (via PDZ domain); the interaction takes place in dendritic spines and promotes GRIA1 exocytosis. Expressed in brain, detected at high levels in hippocampal CA1 (at protein level).

Its subcellular location is the cell projection. It localises to the dendritic spine. It is found in the recycling endosome. The protein localises to the presynapse. The protein resides in the dendrite. Its function is as follows. GTPase-activating protein (GAP) that stimulates the GTPase activity of Rho-type GTPases. Thereby, controls Rho-type GTPases cycling between their active GTP-bound and inactive GDP-bound states. Acts as a GAP at least for CDC42 and RAC1. In neurons, is involved in dendritic spine formation and synaptic plasticity in a specific RAC1-GAP activity. Limits the initiation of exploratory dendritic filopodia. Recruited to actin-patches that seed filopodia, binds specifically to plasma membrane sections that are deformed inward by acto-myosin mediated contractile forces. Acts through GAP activity on RAC1 to reduce actin polymerization necessary for filopodia formation. In association with SHANK3, promotes GRIA1 exocytosis from recycling endosomes and spine morphological changes associated to long-term potentiation. The polypeptide is Rho GTPase-activating protein 44 (Rattus norvegicus (Rat)).